Reading from the N-terminus, the 193-residue chain is Histone H5 (193 aa).

Positions 1-11 (TDSPIPAPAPA) are enriched in pro residues. Disordered stretches follow at residues 1–29 (TDSP…HPTY) and 80–193 (GVLK…PKKK). A compositionally biased stretch (basic residues) spans 13–24 (KPKRARAPRKPA). The region spanning 25–98 (SHPTYSEMIA…GASGSFRLAK (74 aa)) is the H15 domain. Residues 104–193 (RSPAGRKKKK…SGARKSPKKK (90 aa)) show a composition bias toward basic residues.

Belongs to the histone H1/H5 family. In terms of tissue distribution, erythroid cells.

The protein resides in the nucleus. It localises to the chromosome. Its function is as follows. Histone H5 performs the same function as H1, being necessary for the condensation of nucleosome chains into higher order structures, and replaces histone H1 in certain cells. The chain is Histone H5 from Anser anser anser (Western greylag goose).